The sequence spans 741 residues: Zinc finger protein 425 (741 aa).

The KRAB domain occupies 1 to 69; it reads DDVALYFSGQ…EQGCLDKTRR (69 aa). 2 disordered regions span residues 67–86 and 128–169; these read TRRT…DTGK and RRDT…TPGR. Over residues 132–151 the composition is skewed to polar residues; the sequence is FQSPSLQETEIPNKKVSITA. A compositionally biased stretch (basic and acidic residues) spans 153-168; sequence DPDKKDLRHKPRETPG. C2H2-type zinc fingers lie at residues 179–201, 235–257, 263–285, 291–313, 319–341, 347–369, 375–397, 403–425, 431–453, 459–481, 487–509, 515–537, 543–565, 571–593, 599–621, 627–649, 655–677, 683–705, and 711–733; these read YSCY…KRSH, FQCS…QVVH, YPCP…LCLH, FCCG…LRLH, FQCP…LSQH, FHCP…QRTH, FSCD…IRVH, FSCP…GLQH, FQCP…QRLH, FPCA…TRVH, FPCG…LKVH, FSCA…TRLH, FQCP…QRMH, FACS…LRLH, YQCP…LLQH, FSCV…IRVH, FQCP…LYTH, FQCP…LCLH, and FSCD…IAVH.

The protein belongs to the krueppel C2H2-type zinc-finger protein family.

It localises to the nucleus. Its subcellular location is the cytoplasm. Its function is as follows. Acts as a transcriptional repressor. The polypeptide is Zinc finger protein 425 (ZNF425) (Macaca fascicularis (Crab-eating macaque)).